We begin with the raw amino-acid sequence, 23 residues long: Septenin 2 (23 aa).

Expressed in skin glands.

Its subcellular location is the secreted. May act as an antimicrobial peptide. This chain is Septenin 2, found in Osteopilus septentrionalis (Cuban treefrog).